A 395-amino-acid chain; its full sequence is Zinc-regulated GTPase metalloprotein activator 1F (395 aa).

The tract at residues Met1–Leu22 is disordered. Residues Val8–Pro20 are compositionally biased toward acidic residues. The psi-PxLVp motif motif lies at Glu17–Pro24. Gly49–Thr56 lines the GTP pocket. Zn(2+) is bound by residues Cys107, Cys109, and Cys110. The short motif at Cys107–Cys110 is the CXCC motif element. Residues Cys110–Asp114 and Asn203–Asp206 contribute to the GTP site. In terms of domain architecture, CobW C-terminal spans Ile274–Val377.

The protein belongs to the SIMIBI class G3E GTPase family. ZNG1 subfamily.

Its subcellular location is the nucleus. The enzyme catalyses GTP + H2O = GDP + phosphate + H(+). Functionally, zinc chaperone that directly transfers zinc cofactor to target metalloproteins, thereby activating them. Catalyzes zinc insertion into the active site of methionine aminopeptidase METAP1, which function to cleave the initiator methionine from polypeptides during or after protein translation. Mechanistically, the N-terminal psi-PxLVp motif binds to the C6H2-type zinc finger of inactive form of METAP1. After formation of the docked complex, zinc is transferred from the CXCC motif in the GTPase domain of ZNG1F to the zinc binding site in the peptidase domain of METAP1 in a process requiring GTP hydrolysis. GTP/GDP exchange is required for release of active METAP1. This is Zinc-regulated GTPase metalloprotein activator 1F from Homo sapiens (Human).